The sequence spans 662 residues: Methionine--tRNA ligase (662 aa).

The 'HIGH' region motif lies at 13–23; that stretch reads PYTNGPCHLGH. Positions 144, 147, 156, and 160 each coordinate Zn(2+). The 'KMSKS' region signature appears at 326–330; the sequence is KFSKS. Lysine 329 is a binding site for ATP. A tRNA-binding domain is found at 564 to 662; sequence DFSKVEIKTG…KPVEPGTKIR (99 aa).

The protein belongs to the class-I aminoacyl-tRNA synthetase family. MetG type 1 subfamily. Homodimer. It depends on Zn(2+) as a cofactor.

Its subcellular location is the cytoplasm. The catalysed reaction is tRNA(Met) + L-methionine + ATP = L-methionyl-tRNA(Met) + AMP + diphosphate. Functionally, is required not only for elongation of protein synthesis but also for the initiation of all mRNA translation through initiator tRNA(fMet) aminoacylation. The sequence is that of Methionine--tRNA ligase from Methanoregula boonei (strain DSM 21154 / JCM 14090 / 6A8).